The primary structure comprises 105 residues: 5,5'-dehydrodivanillate O-demethylase ferredoxin subunit (105 aa).

The 2Fe-2S ferredoxin-type domain occupies 2–105; it reads AQLKVVTRDG…GMTVTIAPED (104 aa). [2Fe-2S] cluster-binding residues include Cys-40, Cys-46, Cys-49, and Cys-86.

Belongs to the adrenodoxin/putidaredoxin family. Monomer. The three-component monooxygenase is composed of an oxygenase (LigXa), a ferredoxin (LigXc) and a ferredoxin reductase (LigXd). Requires [2Fe-2S] cluster as cofactor.

The catalysed reaction is 5,5'-dehydrodivanillate + NADH + O2 + H(+) = 2,2',3-trihydroxy-3'-methoxy-5,5'-dicarboxybiphenyl + formaldehyde + NAD(+) + H2O. Functionally, involved in the catabolism of 5,5'-dehydrodivanillate (DDVA), an intermediate in the biodegradation of lignin. Part of a three-component monooxygenase that catalyzes the O-demethylation of DDVA, leading to the formation of 2,2',3-trihydroxy-3'-methoxy-5,5'-dicarboxybiphenyl (OH-DDVA). LigXc probably functions as an intermediate electron transfer protein between LigXd and LigXa. This Sphingobium sp. (strain NBRC 103272 / SYK-6) protein is 5,5'-dehydrodivanillate O-demethylase ferredoxin subunit.